A 473-amino-acid polypeptide reads, in one-letter code: Mogroside IIIx synthase (473 aa).

His21 serves as the catalytic Proton acceptor. Catalysis depends on Asp123, which acts as the Charge relay. UDP-alpha-D-glucose contacts are provided by Thr274, Gln337, Trp355, Asn356, Ser357, Glu360, Asp376, and Gln377.

Belongs to the UDP-glycosyltransferase family. In terms of tissue distribution, highly expressed in mature fruits.

It catalyses the reaction mogroside IIE + UDP-alpha-D-glucose = mogroside IIIX + UDP + H(+). The catalysed reaction is mogroside III + UDP-alpha-D-glucose = siamenoside I + UDP + H(+). It participates in secondary metabolite biosynthesis; terpenoid biosynthesis. UDP-glycosyltransferase involved in the biosynthesis of cucurbitacin and mogroside tetracyclic triterpene natural products (e.g. siamenoside I and mogrosides IV, V and VI). Cucurbitacins have cytotoxic properties and exhibit deterrent taste as a defense barrier against herbivores. Mogrosides are nonsugar highly oxygenated compounds used as high-intensity zero-calorie sweeteners; they also possess pharmacological properties such as regulating immunity, lowering blood sugar and lipid levels, protecting the liver, and acting as antioxidants and antitumor agents. Catalyzes the branched glucosylations of mogroside II-E and mogroside III. The sequence is that of Mogroside IIIx synthase from Siraitia grosvenorii (Monk's fruit).